The sequence spans 159 residues: NAD(P)H-quinone oxidoreductase subunit J, chloroplastic (159 aa).

This sequence belongs to the complex I 30 kDa subunit family. In terms of assembly, NDH is composed of at least 16 different subunits, 5 of which are encoded in the nucleus.

It localises to the plastid. It is found in the chloroplast thylakoid membrane. It carries out the reaction a plastoquinone + NADH + (n+1) H(+)(in) = a plastoquinol + NAD(+) + n H(+)(out). The catalysed reaction is a plastoquinone + NADPH + (n+1) H(+)(in) = a plastoquinol + NADP(+) + n H(+)(out). Functionally, NDH shuttles electrons from NAD(P)H:plastoquinone, via FMN and iron-sulfur (Fe-S) centers, to quinones in the photosynthetic chain and possibly in a chloroplast respiratory chain. The immediate electron acceptor for the enzyme in this species is believed to be plastoquinone. Couples the redox reaction to proton translocation, and thus conserves the redox energy in a proton gradient. The chain is NAD(P)H-quinone oxidoreductase subunit J, chloroplastic from Oryza nivara (Indian wild rice).